Here is a 511-residue protein sequence, read N- to C-terminus: Glucans biosynthesis protein G (511 aa).

Positions 1–22 (MMKMRWLSAAVMLTLYTSSSWA) are cleaved as a signal peptide.

Belongs to the OpgD/OpgG family.

Its subcellular location is the periplasm. Its pathway is glycan metabolism; osmoregulated periplasmic glucan (OPG) biosynthesis. In terms of biological role, involved in the biosynthesis of osmoregulated periplasmic glucans (OPGs). In Shigella flexneri, this protein is Glucans biosynthesis protein G (mdoG).